We begin with the raw amino-acid sequence, 512 residues long: Cytochrome P450 82C3 (512 aa).

Residues 1-21 (MDTSLFSLFVSILVFVFIALF) traverse the membrane as a helical segment. Position 451 (Cys451) interacts with heme.

The protein belongs to the cytochrome P450 family. It depends on heme as a cofactor.

It localises to the membrane. The protein is Cytochrome P450 82C3 (CYP82C3) of Arabidopsis thaliana (Mouse-ear cress).